An 87-amino-acid chain; its full sequence is Homeotic protein ultrabithorax (87 aa).

Positions 22–27 match the Antp-type hexapeptide motif; sequence FYPWMA.

It belongs to the Antp homeobox family. In the embryo, expression is seen in the epidermis, somatic and visceral mesoderm, and the peripheral and central nervous system.

The protein localises to the nucleus. In terms of biological role, sequence-specific transcription factor which is part of a developmental regulatory system that provides cells with specific positional identities on the anterior-posterior axis. Binds the consensus region 5'-TTAAT[GT][GA]-3'. This homeotic protein controls development of the cells in the posterior thoracic and first abdominal segments. It activates the synthesis of the decapentaplegic (DPP) growth factor. The polypeptide is Homeotic protein ultrabithorax (Ubx) (Drosophila hydei (Fruit fly)).